The sequence spans 240 residues: 4-hydroxy-tetrahydrodipicolinate reductase (240 aa).

NAD(+)-binding positions include 79–81 and 103–106; these read ATT and SANM. H135 (proton donor/acceptor) is an active-site residue. Residue H136 coordinates (S)-2,3,4,5-tetrahydrodipicolinate. K139 (proton donor) is an active-site residue. Residue 145–146 coordinates (S)-2,3,4,5-tetrahydrodipicolinate; that stretch reads GT.

It belongs to the DapB family.

The protein localises to the cytoplasm. It carries out the reaction (S)-2,3,4,5-tetrahydrodipicolinate + NAD(+) + H2O = (2S,4S)-4-hydroxy-2,3,4,5-tetrahydrodipicolinate + NADH + H(+). The enzyme catalyses (S)-2,3,4,5-tetrahydrodipicolinate + NADP(+) + H2O = (2S,4S)-4-hydroxy-2,3,4,5-tetrahydrodipicolinate + NADPH + H(+). Its pathway is amino-acid biosynthesis; L-lysine biosynthesis via DAP pathway; (S)-tetrahydrodipicolinate from L-aspartate: step 4/4. Its function is as follows. Catalyzes the conversion of 4-hydroxy-tetrahydrodipicolinate (HTPA) to tetrahydrodipicolinate. The chain is 4-hydroxy-tetrahydrodipicolinate reductase from Staphylococcus saprophyticus subsp. saprophyticus (strain ATCC 15305 / DSM 20229 / NCIMB 8711 / NCTC 7292 / S-41).